The primary structure comprises 290 residues: Bifunctional protein FolD 1 (290 aa).

Residues 172 to 174 and Ile-238 contribute to the NADP(+) site; that span reads GAS.

It belongs to the tetrahydrofolate dehydrogenase/cyclohydrolase family. As to quaternary structure, homodimer.

It catalyses the reaction (6R)-5,10-methylene-5,6,7,8-tetrahydrofolate + NADP(+) = (6R)-5,10-methenyltetrahydrofolate + NADPH. The enzyme catalyses (6R)-5,10-methenyltetrahydrofolate + H2O = (6R)-10-formyltetrahydrofolate + H(+). It participates in one-carbon metabolism; tetrahydrofolate interconversion. Catalyzes the oxidation of 5,10-methylenetetrahydrofolate to 5,10-methenyltetrahydrofolate and then the hydrolysis of 5,10-methenyltetrahydrofolate to 10-formyltetrahydrofolate. This Pseudomonas putida (strain GB-1) protein is Bifunctional protein FolD 1.